A 350-amino-acid polypeptide reads, in one-letter code: MKVLRVNLDEKSYDIVIQKDLKDYFGEYIKTVFDGKKVAIITDDNLNDIYGEAIKKNIENEGFEVEVISVTPGEKSKSFSILPGIYNKLLDFKLTRSDLIIALGGGVVGDLAGFVASTFLRGISFIQIPTSLLAQVDSSVGGKVAVDLERGKNLVGSFYHPQLVLIDPNMLGTLPEKYFNDGLGEVIKYGCIKSKELFEKLEGFKNKEDLKENIGEIIYECCNIKRELVENDEKDLGERMILNFGHTLGHAIEQIYNYETYSHGEAVAIGMNMISKIAEEKDLTKKGTAERIESLLKKYGLNTDVNIEDNGLAREAIKLDKKNLNGNLNVILLKDIGEGYIYNTTVEFFE.

Residues G106–D110, T130–S131, K143, and K152 contribute to the NAD(+) site. The Zn(2+) site is built by E185, H246, and H263.

The protein belongs to the sugar phosphate cyclases superfamily. Dehydroquinate synthase family. The cofactor is Co(2+). It depends on Zn(2+) as a cofactor. Requires NAD(+) as cofactor.

The protein localises to the cytoplasm. It catalyses the reaction 7-phospho-2-dehydro-3-deoxy-D-arabino-heptonate = 3-dehydroquinate + phosphate. It functions in the pathway metabolic intermediate biosynthesis; chorismate biosynthesis; chorismate from D-erythrose 4-phosphate and phosphoenolpyruvate: step 2/7. Its function is as follows. Catalyzes the conversion of 3-deoxy-D-arabino-heptulosonate 7-phosphate (DAHP) to dehydroquinate (DHQ). The chain is 3-dehydroquinate synthase from Clostridium perfringens (strain SM101 / Type A).